Reading from the N-terminus, the 1234-residue chain is DNA-directed RNA polymerase subunit beta (1234 aa).

Residues 1169–1234 (ESVDEDADEL…LDLDDFGDEH (66 aa)) are disordered. Acidic residues-rich tracts occupy residues 1171 to 1180 (VDEDADELEV) and 1191 to 1234 (EKEE…GDEH).

Belongs to the RNA polymerase beta chain family. The RNAP catalytic core consists of 2 alpha, 1 beta, 1 beta' and 1 omega subunit. When a sigma factor is associated with the core the holoenzyme is formed, which can initiate transcription.

It catalyses the reaction RNA(n) + a ribonucleoside 5'-triphosphate = RNA(n+1) + diphosphate. In terms of biological role, DNA-dependent RNA polymerase catalyzes the transcription of DNA into RNA using the four ribonucleoside triphosphates as substrates. This is DNA-directed RNA polymerase subunit beta from Clostridium botulinum (strain Langeland / NCTC 10281 / Type F).